A 793-amino-acid chain; its full sequence is Protein zer-1 homolog (793 aa).

LRR repeat units follow at residues 84-108, 187-210, and 269-294; these read RTSL…LMRH, LHDL…ALGS, and LRHL…ESTT.

The protein belongs to the zyg-11 family.

In terms of biological role, serves as substrate adapter subunit in an E3 ubiquitin ligase complex CG12084-cul-2-elongin BC. Targets substrates bearing N-terminal glycine degrons for proteasomal degradation. This Drosophila melanogaster (Fruit fly) protein is Protein zer-1 homolog.